A 373-amino-acid chain; its full sequence is 4-hydroxy-3-methylbut-2-en-1-yl diphosphate synthase (flavodoxin) (373 aa).

[4Fe-4S] cluster contacts are provided by Cys270, Cys273, Cys305, and Glu312.

The protein belongs to the IspG family. It depends on [4Fe-4S] cluster as a cofactor.

The enzyme catalyses (2E)-4-hydroxy-3-methylbut-2-enyl diphosphate + oxidized [flavodoxin] + H2O + 2 H(+) = 2-C-methyl-D-erythritol 2,4-cyclic diphosphate + reduced [flavodoxin]. Its pathway is isoprenoid biosynthesis; isopentenyl diphosphate biosynthesis via DXP pathway; isopentenyl diphosphate from 1-deoxy-D-xylulose 5-phosphate: step 5/6. Its function is as follows. Converts 2C-methyl-D-erythritol 2,4-cyclodiphosphate (ME-2,4cPP) into 1-hydroxy-2-methyl-2-(E)-butenyl 4-diphosphate. The sequence is that of 4-hydroxy-3-methylbut-2-en-1-yl diphosphate synthase (flavodoxin) from Erwinia tasmaniensis (strain DSM 17950 / CFBP 7177 / CIP 109463 / NCPPB 4357 / Et1/99).